The following is a 346-amino-acid chain: Low specificity L-threonine aldolase (346 aa).

Residue lysine 207 is modified to N6-(pyridoxal phosphate)lysine.

The protein belongs to the threonine aldolase family. In terms of assembly, homotetramer. Pyridoxal 5'-phosphate is required as a cofactor.

The catalysed reaction is L-threonine = acetaldehyde + glycine. The enzyme catalyses L-allo-threonine = acetaldehyde + glycine. Catalyzes the cleavage of L-allo-threonine and L-threonine to glycine and acetaldehyde. This chain is Low specificity L-threonine aldolase (ltaE), found in Pseudomonas aeruginosa (strain ATCC 15692 / DSM 22644 / CIP 104116 / JCM 14847 / LMG 12228 / 1C / PRS 101 / PAO1).